The primary structure comprises 181 residues: Cytochrome c-type biogenesis protein CcmE (181 aa).

Over 1-8 (MNPRRKSR) the chain is Cytoplasmic. A helical; Signal-anchor for type II membrane protein transmembrane segment spans residues 9–29 (LKVVVSIIFGVAVAAGLTLYA). Topologically, residues 30–181 (LSQNIDLFYT…TLKTLQGEAN (152 aa)) are periplasmic. Residues histidine 131 and tyrosine 135 each coordinate heme. Composition is skewed to basic and acidic residues over residues 135–148 (YMPP…KEQH) and 156–166 (ADLKGTSARDK). Residues 135–166 (YMPPELGDKLKEQHGAAGISEADLKGTSARDK) form a disordered region.

The protein belongs to the CcmE/CycJ family.

It localises to the cell inner membrane. In terms of biological role, heme chaperone required for the biogenesis of c-type cytochromes. Transiently binds heme delivered by CcmC and transfers the heme to apo-cytochromes in a process facilitated by CcmF and CcmH. This Actinobacillus pleuropneumoniae serotype 7 (strain AP76) protein is Cytochrome c-type biogenesis protein CcmE.